The primary structure comprises 215 residues: Variable small protein 2 (215 aa).

An N-terminal signal peptide occupies residues 1-18; sequence MRKRISAIIMTLFMVFMS. Cys19 is lipidated: N-palmitoyl cysteine. A lipid anchor (S-diacylglycerol cysteine) is attached at Cys19.

It belongs to the variable small protein (Vsp) family.

Its subcellular location is the cell outer membrane. In terms of biological role, the Vlp and Vsp proteins are antigenically distinct proteins, only one vlp or vsp gene is transcriptionally active at any one time. Switching between these genes is a mechanism of host immune response evasion. This Borrelia hermsii protein is Variable small protein 2.